The chain runs to 355 residues: MKNILDLTKEELQQEVTPKFRANQIYQWIYQKGAKDFESMSNLPKSMREELKEKFTITPPKILNVEVSKDGSKKYLLGLQDGHTVESVLLPMKKEERDEKGNILKEARYTVCVSSQVGCKVGCEFCLTAKGGFVRNLTPGEIVEQVLTIREDNNIPANRRVNIVYMGMGEPLDNLENVAKAVKIFSDEHGMSISPRRQTISTSGLAPKIKKLGEMNLGVLLAISLHAVDDELRQKLMPINKAYNIESVIQAVKEFPIDQRKRVMFEYLMIKNLNDDLKAAKKLVKLLHGIKAKVNLIYFNPYPGSPFQRPEPKDVEAFQKYLLDHGVLCTIRESKGLDISAACGQLKEKSHGCTL.

The active-site Proton acceptor is the Glu86. The Radical SAM core domain occupies 105–338; the sequence is KEARYTVCVS…CTIRESKGLD (234 aa). A disulfide bond links Cys112 and Cys343. [4Fe-4S] cluster-binding residues include Cys119, Cys123, and Cys126. Residues 169-170, Ser201, 224-226, and Asn300 each bind S-adenosyl-L-methionine; these read GE and SLH. Residue Cys343 is the S-methylcysteine intermediate of the active site.

It belongs to the radical SAM superfamily. RlmN family. Requires [4Fe-4S] cluster as cofactor.

It is found in the cytoplasm. The catalysed reaction is adenosine(2503) in 23S rRNA + 2 reduced [2Fe-2S]-[ferredoxin] + 2 S-adenosyl-L-methionine = 2-methyladenosine(2503) in 23S rRNA + 5'-deoxyadenosine + L-methionine + 2 oxidized [2Fe-2S]-[ferredoxin] + S-adenosyl-L-homocysteine. It catalyses the reaction adenosine(37) in tRNA + 2 reduced [2Fe-2S]-[ferredoxin] + 2 S-adenosyl-L-methionine = 2-methyladenosine(37) in tRNA + 5'-deoxyadenosine + L-methionine + 2 oxidized [2Fe-2S]-[ferredoxin] + S-adenosyl-L-homocysteine. Its function is as follows. Specifically methylates position 2 of adenine 2503 in 23S rRNA and position 2 of adenine 37 in tRNAs. m2A2503 modification seems to play a crucial role in the proofreading step occurring at the peptidyl transferase center and thus would serve to optimize ribosomal fidelity. This is Dual-specificity RNA methyltransferase RlmN from Nitratiruptor sp. (strain SB155-2).